Consider the following 269-residue polypeptide: Hydroxyethylthiazole kinase (269 aa).

M41 contributes to the substrate binding site. ATP is bound by residues R117 and S163. G190 is a binding site for substrate.

This sequence belongs to the Thz kinase family. Mg(2+) serves as cofactor.

It carries out the reaction 5-(2-hydroxyethyl)-4-methylthiazole + ATP = 4-methyl-5-(2-phosphooxyethyl)-thiazole + ADP + H(+). Its pathway is cofactor biosynthesis; thiamine diphosphate biosynthesis; 4-methyl-5-(2-phosphoethyl)-thiazole from 5-(2-hydroxyethyl)-4-methylthiazole: step 1/1. In terms of biological role, catalyzes the phosphorylation of the hydroxyl group of 4-methyl-5-beta-hydroxyethylthiazole (THZ). The protein is Hydroxyethylthiazole kinase of Latilactobacillus sakei subsp. sakei (strain 23K) (Lactobacillus sakei subsp. sakei).